A 730-amino-acid chain; its full sequence is Synaptogenesis protein syg-1 (730 aa).

Positions 1–18 (MVRWQTWPLLLLFQLVTC) are cleaved as a signal peptide. The Extracellular portion of the chain corresponds to 19–551 (QQLQQRIVEA…WIVITAKFDR (533 aa)). Ig-like domains lie at 23-123 (QRIV…AKLT), 131-265 (PKIV…VKLS), 270-352 (PQIN…IKLN), 357-433 (ARIM…QILS), and 441-540 (PPTV…RNIL). Cystine bridges form between cysteine 44–cysteine 104, cysteine 152–cysteine 246, cysteine 292–cysteine 336, cysteine 378–cysteine 420, and cysteine 462–cysteine 519. N-linked (GlcNAc...) asparagine glycosylation is found at asparagine 93 and asparagine 206. A helical membrane pass occupies residues 552-572 (MVALAIISAGVLLVSLLCCLC). The Cytoplasmic portion of the chain corresponds to 573-730 (MCRSNCRSRK…RPISRTSTHV (158 aa)).

This sequence belongs to the immunoglobulin superfamily. Interacts with skr-1. Interacts with syg-2. Interacts with the WAVE regulatory complex; the interaction leads to formation of a synaptic F-actin network that is required for synapse formation and axon branching. Expression in head motor neurons, occasionally in HSN neurons and weakly in other cells in the vulval region. Expressed in the primary synapse region of HSNL motor neuron.

It localises to the cell membrane. The protein resides in the cell projection. Its subcellular location is the axon. The protein localises to the synapse. Functionally, cell adhesion protein. Involved in synapse formation in the HSNL egg-laying motor neuron. Inhibits assembly of the SCF(sel-10) E3 ubiquitin ligase complex at synapses, and protects them from elimination. Also required for F-actin assembly at the synaptic region and for axon branch formation. The protein is Synaptogenesis protein syg-1 of Caenorhabditis elegans.